The chain runs to 304 residues: UDP-N-acetylenolpyruvoylglucosamine reductase (304 aa).

The FAD-binding PCMH-type domain occupies 33–198 (RVGGPVDILL…ITATFCFESG (166 aa)). Residue Arg-177 is part of the active site. Residue Ser-227 is the Proton donor of the active site. Residue Glu-297 is part of the active site.

This sequence belongs to the MurB family. Requires FAD as cofactor.

The protein resides in the cytoplasm. It carries out the reaction UDP-N-acetyl-alpha-D-muramate + NADP(+) = UDP-N-acetyl-3-O-(1-carboxyvinyl)-alpha-D-glucosamine + NADPH + H(+). The protein operates within cell wall biogenesis; peptidoglycan biosynthesis. In terms of biological role, cell wall formation. This Clostridium botulinum (strain Eklund 17B / Type B) protein is UDP-N-acetylenolpyruvoylglucosamine reductase.